The sequence spans 187 residues: uncharacterized protein (187 aa).

Residues 42 to 63 (RTNGPGKDSFSFSTSGSKPSSS) are disordered. Over residues 50 to 63 (SFSFSTSGSKPSSS) the composition is skewed to low complexity.

This is an uncharacterized protein from Saccharomyces cerevisiae (strain ATCC 204508 / S288c) (Baker's yeast).